Here is a 475-residue protein sequence, read N- to C-terminus: Lactate utilization protein B (475 aa).

4Fe-4S ferredoxin-type domains lie at 304-334 and 353-382; these read GTEF…GHSY and YDDY…LHEL. [4Fe-4S] cluster-binding residues include C313, C316, C319, C323, C366, C369, and C373.

It belongs to the LutB/YkgF family.

Functionally, is involved in L-lactate degradation and allows cells to grow with lactate as the sole carbon source. Has probably a role as an electron transporter during oxidation of L-lactate. This Geobacillus sp. (strain WCH70) protein is Lactate utilization protein B.